Consider the following 469-residue polypeptide: UDP-N-acetylmuramate--L-alanine ligase (469 aa).

119–125 (GTHGKTT) lines the ATP pocket.

Belongs to the MurCDEF family.

The protein localises to the cytoplasm. It catalyses the reaction UDP-N-acetyl-alpha-D-muramate + L-alanine + ATP = UDP-N-acetyl-alpha-D-muramoyl-L-alanine + ADP + phosphate + H(+). It participates in cell wall biogenesis; peptidoglycan biosynthesis. In terms of biological role, cell wall formation. The polypeptide is UDP-N-acetylmuramate--L-alanine ligase (Vesicomyosocius okutanii subsp. Calyptogena okutanii (strain HA)).